We begin with the raw amino-acid sequence, 74 residues long: Cytochrome c oxidase assembly factor 5 (74 aa).

Positions 27–65 (ESDCVVQEGKSPRQCLKEGYCNSLKYAFFECKRSVLDNR) constitute a CHCH domain. The short motif at 30-41 (CVVQEGKSPRQC) is the Cx10C motif element. 2 disulfide bridges follow: C30/C57 and C41/C47. At S37 the chain carries Phosphoserine. Positions 47 to 57 (CNSLKYAFFEC) match the Cx9C motif motif.

Belongs to the PET191 family.

Its function is as follows. Involved in an early step of the mitochondrial complex IV assembly process. This chain is Cytochrome c oxidase assembly factor 5 (Coa5), found in Pongo abelii (Sumatran orangutan).